A 426-amino-acid chain; its full sequence is Serine--tRNA ligase (426 aa).

Residues 36–66 (KRKHLQERTQDLQSQRNTISKEIGQKKAKGE) form a disordered region. Residues 46 to 55 (DLQSQRNTIS) are compositionally biased toward polar residues. 233 to 235 (TAE) lines the L-serine pocket. Residue 264–266 (RSE) coordinates ATP. E287 provides a ligand contact to L-serine. Position 351 to 354 (351 to 354 (EISS)) interacts with ATP. S387 is an L-serine binding site.

Belongs to the class-II aminoacyl-tRNA synthetase family. Type-1 seryl-tRNA synthetase subfamily. As to quaternary structure, homodimer. The tRNA molecule binds across the dimer.

Its subcellular location is the cytoplasm. It catalyses the reaction tRNA(Ser) + L-serine + ATP = L-seryl-tRNA(Ser) + AMP + diphosphate + H(+). The catalysed reaction is tRNA(Sec) + L-serine + ATP = L-seryl-tRNA(Sec) + AMP + diphosphate + H(+). Its pathway is aminoacyl-tRNA biosynthesis; selenocysteinyl-tRNA(Sec) biosynthesis; L-seryl-tRNA(Sec) from L-serine and tRNA(Sec): step 1/1. Functionally, catalyzes the attachment of serine to tRNA(Ser). Is also able to aminoacylate tRNA(Sec) with serine, to form the misacylated tRNA L-seryl-tRNA(Sec), which will be further converted into selenocysteinyl-tRNA(Sec). In Francisella tularensis subsp. holarctica (strain FTNF002-00 / FTA), this protein is Serine--tRNA ligase.